A 122-amino-acid chain; its full sequence is Large ribosomal subunit protein uL14 (122 aa).

Belongs to the universal ribosomal protein uL14 family. As to quaternary structure, part of the 50S ribosomal subunit. Forms a cluster with proteins L3 and L19. In the 70S ribosome, L14 and L19 interact and together make contacts with the 16S rRNA in bridges B5 and B8.

Its function is as follows. Binds to 23S rRNA. Forms part of two intersubunit bridges in the 70S ribosome. The polypeptide is Large ribosomal subunit protein uL14 (Psychrobacter arcticus (strain DSM 17307 / VKM B-2377 / 273-4)).